The following is a 74-amino-acid chain: Conotoxin Vt11.7 (74 aa).

The first 26 residues, 1 to 26, serve as a signal peptide directing secretion; it reads MMFRLTSVGCFLLVIVLLNVAVLTNA. Disulfide bonds link cysteine 28–cysteine 42, cysteine 35–cysteine 47, cysteine 41–cysteine 51, and cysteine 46–cysteine 55. Positions 62–74 are excised as a propeptide; it reads AHGHGLLRFWGQR.

It belongs to the conotoxin I2 superfamily. Expressed by the venom duct.

The protein localises to the secreted. This Conus planorbis (Planorbis cone) protein is Conotoxin Vt11.7.